Reading from the N-terminus, the 688-residue chain is GTPase IMAP family member 8 (688 aa).

A disordered region spans residues 22 to 44 (TSIGQGERPRASRGQESNFKQSQ). Over residues 35-44 (GQESNFKQSQ) the composition is skewed to polar residues. AIG1-type G domains follow at residues 46–246 (TSTL…TENS), 281–471 (TPEL…VIRE), and 472–681 (KELL…SAVG). A G1 region spans residues 55–62 (GKQGAGKS). Residues 55–63 (GKQGAGKSA) and serine 76 each bind GTP. Positions 82 to 86 (MVTKR) are G2. The G3 stretch occupies residues 103–106 (DTPD). Positions 171–174 (TRED) are G4. GTP contacts are provided by residues 172–174 (RED) and asparagine 208. A G5 region spans residues 207–209 (NNK).

Belongs to the TRAFAC class TrmE-Era-EngA-EngB-Septin-like GTPase superfamily. AIG1/Toc34/Toc159-like paraseptin GTPase family. IAN subfamily. In terms of tissue distribution, spleen, thymus and T-cells. Greatly reduced in T-cells from lymphopenic rats.

It is found in the endoplasmic reticulum. The protein localises to the golgi apparatus. It localises to the mitochondrion. Its subcellular location is the cytoplasm. The protein resides in the cytosol. In terms of biological role, exerts an anti-apoptotic effect in the immune system and is involved in responses to infections. The protein is GTPase IMAP family member 8 (Gimap8) of Rattus norvegicus (Rat).